Consider the following 488-residue polypeptide: Membrane-bound lytic murein transglycosylase F (488 aa).

Positions 1 to 25 (MFARPAIRMRCATGLLAIGTLLMLA) are cleaved as a signal peptide. Residues 26 to 269 (GCGEEPKPSV…RLKERYYGHV (244 aa)) are non-LT domain. The interval 270–488 (DVLGYVGAYT…RTLDEQTPPL (219 aa)) is LT domain. Residue Glu-316 is part of the active site.

This sequence in the N-terminal section; belongs to the bacterial solute-binding protein 3 family. The protein in the C-terminal section; belongs to the transglycosylase Slt family.

It is found in the cell outer membrane. It catalyses the reaction Exolytic cleavage of the (1-&gt;4)-beta-glycosidic linkage between N-acetylmuramic acid (MurNAc) and N-acetylglucosamine (GlcNAc) residues in peptidoglycan, from either the reducing or the non-reducing ends of the peptidoglycan chains, with concomitant formation of a 1,6-anhydrobond in the MurNAc residue.. In terms of biological role, murein-degrading enzyme that degrades murein glycan strands and insoluble, high-molecular weight murein sacculi, with the concomitant formation of a 1,6-anhydromuramoyl product. Lytic transglycosylases (LTs) play an integral role in the metabolism of the peptidoglycan (PG) sacculus. Their lytic action creates space within the PG sacculus to allow for its expansion as well as for the insertion of various structures such as secretion systems and flagella. This Ectopseudomonas mendocina (strain ymp) (Pseudomonas mendocina) protein is Membrane-bound lytic murein transglycosylase F.